Consider the following 111-residue polypeptide: uncharacterized protein (111 aa).

4 consecutive transmembrane segments (helical) span residues 3–23, 24–44, 54–74, and 80–100; these read WVLV…LKHA, DSLL…ILLI, AAYT…GIVL, and AAQM…KLFT.

The protein belongs to the drug/metabolite transporter (DMT) superfamily. Small multidrug resistance (SMR) (TC 2.A.7.1) family.

The protein localises to the cell membrane. This is an uncharacterized protein from Bacillus subtilis (strain 168).